A 192-amino-acid polypeptide reads, in one-letter code: UPF0312 protein Pput_4854 (192 aa).

Positions 1–23 (MLKKTFAALALGTALLSAGQAMA) are cleaved as a signal peptide.

This sequence belongs to the UPF0312 family. Type 1 subfamily.

It localises to the periplasm. The sequence is that of UPF0312 protein Pput_4854 from Pseudomonas putida (strain ATCC 700007 / DSM 6899 / JCM 31910 / BCRC 17059 / LMG 24140 / F1).